Reading from the N-terminus, the 277-residue chain is Shikimate dehydrogenase (NADP(+)) (277 aa).

Shikimate contacts are provided by residues 18–20 (SKS) and Thr-65. Catalysis depends on Lys-69, which acts as the Proton acceptor. Residue Glu-81 coordinates NADP(+). Asn-90 and Asp-106 together coordinate shikimate. Residues 130-134 (GAGGA), 154-159 (NRTFSK), and Met-217 each bind NADP(+). Tyr-219 is a shikimate binding site. Residue Gly-241 coordinates NADP(+).

It belongs to the shikimate dehydrogenase family. Homodimer.

The enzyme catalyses shikimate + NADP(+) = 3-dehydroshikimate + NADPH + H(+). The protein operates within metabolic intermediate biosynthesis; chorismate biosynthesis; chorismate from D-erythrose 4-phosphate and phosphoenolpyruvate: step 4/7. Involved in the biosynthesis of the chorismate, which leads to the biosynthesis of aromatic amino acids. Catalyzes the reversible NADPH linked reduction of 3-dehydroshikimate (DHSA) to yield shikimate (SA). This is Shikimate dehydrogenase (NADP(+)) from Vibrio parahaemolyticus serotype O3:K6 (strain RIMD 2210633).